The following is a 150-amino-acid chain: MNTCIQLLILCLVTVINSENLTDISTETTIENEIENATETELSEAIEKETENVTETELPDTVKTEIQFETQNLPHNPKQKYCRTEGQYCSRTYFHRCCGNLVCQLHGFFNGTCVQCLAERKFCIWSSECCSKRCRLFRCRKNPYVQVIPY.

Positions 1–18 are cleaved as a signal peptide; that stretch reads MNTCIQLLILCLVTVINS. N20, N36, N52, and N110 each carry an N-linked (GlcNAc...) asparagine glycan. 3 disulfides stabilise this stretch: C116–C130, C123–C134, and C129–C139.

Belongs to the UPF0506 family.

The protein localises to the secreted. This Schistosoma japonicum (Blood fluke) protein is UPF0506 protein SJCHGC03144.